A 445-amino-acid polypeptide reads, in one-letter code: Phosphoglucosamine mutase (445 aa).

Ser-102 (phosphoserine intermediate) is an active-site residue. Mg(2+) contacts are provided by Ser-102, Asp-241, Asp-243, and Asp-245. At Ser-102 the chain carries Phosphoserine.

This sequence belongs to the phosphohexose mutase family. Requires Mg(2+) as cofactor. In terms of processing, activated by phosphorylation.

It carries out the reaction alpha-D-glucosamine 1-phosphate = D-glucosamine 6-phosphate. Its function is as follows. Catalyzes the conversion of glucosamine-6-phosphate to glucosamine-1-phosphate. The sequence is that of Phosphoglucosamine mutase from Edwardsiella ictaluri (strain 93-146).